Reading from the N-terminus, the 329-residue chain is G-protein coupled receptor 3 (329 aa).

At 1–43 (MMWGAGRSMAWFSAGSGSVNVSIDPAEEPTGPATLLPSPRAWD) the chain is on the extracellular side. The N-linked (GlcNAc...) asparagine glycan is linked to N20. Residues 44–64 (VVLCISGTLVSCENALVVAII) form a helical membrane-spanning segment. The Cytoplasmic portion of the chain corresponds to 65–73 (VGTPAFRAP). Residues 74-94 (MFLLVGSLAVADLLAGLGLVL) form a helical membrane-spanning segment. The Extracellular segment spans residues 95–108 (HFAADFCIGSPEMS). A helical membrane pass occupies residues 109-129 (LVLVGVLATAFTASIGSLLAI). Residues 130–153 (TVDRYLSLYNALTYYSETTVTRTY) are Cytoplasmic-facing. Residues 154–174 (VMLALVWVGALGLGLVPVLAW) form a helical membrane-spanning segment. Over 175–192 (NCRDGLTTCGVVYPLSKN) the chain is Extracellular. A helical membrane pass occupies residues 193–213 (HLVVLAIVFFMVFGIMLQLYA). Over 214–247 (QICRIVCRHAQQIALQRHLLPASHYVATRKGIAT) the chain is Cytoplasmic. A helical transmembrane segment spans residues 248 to 268 (LAVVLGAFAACWLPFTVYCLL). Residues 269-277 (GDANSPPLY) are Extracellular-facing. Residues 278-298 (TYLTLLPATYNSMINPVIYAF) form a helical membrane-spanning segment. Over 299 to 329 (RNQDVQKVLWAICCCCSTSKIPFRSRSPSDV) the chain is Cytoplasmic. The S-palmitoyl cysteine moiety is linked to residue C312. Residues S323, S325, and S327 each carry the phosphoserine modification.

The protein belongs to the G-protein coupled receptor 1 family. Abundantly expressed in granule neurons at all development stages. Enriched in the longest tips of neurites during differentiation of hippocampal neurons.

The protein resides in the cell membrane. Functionally, constitutively active G-protein coupled receptor that maintains high 3'-5'-cyclic adenosine monophosphate (cAMP) levels that a plays a role in serveral processes including meiotic arrest in oocytes or neuronal development via activation of numerous intracellular signaling pathways. Acts as an essential activator of thermogenic adipocytes and drives thermogenesis via its intrinsic G(s)-coupling activity without the requirement of a ligand. Has a potential role in modulating a number of brain functions, including behavioral responses to stress, amyloid-beta peptide generation in neurons. Stimulates neurite outgrowth in cerebellar granular neurons modulated via PKA, ERK, and most strongly PI3K-mediated signaling pathways. In Rattus norvegicus (Rat), this protein is G-protein coupled receptor 3 (Gpr3).